Consider the following 1003-residue polypeptide: Glycine--tRNA ligase (1003 aa).

The tract at residues 1–310 (MSSQPLTLQD…VTAKQIPHIC (310 aa)) is glycine--tRNA ligase alpha subunit. The tract at residues 311–1003 (QDEDFLLEIG…CFGFYAWDAL (693 aa)) is glycine--tRNA ligase beta subunit.

This sequence belongs to the class-II aminoacyl-tRNA synthetase family.

It is found in the cytoplasm. The enzyme catalyses tRNA(Gly) + glycine + ATP = glycyl-tRNA(Gly) + AMP + diphosphate. This Chlamydia muridarum (strain MoPn / Nigg) protein is Glycine--tRNA ligase (glyQS).